A 166-amino-acid polypeptide reads, in one-letter code: Transmembrane protein 190 (166 aa).

The first 21 residues, 1–21 (MVGSGISALGLLLLMQGSVDA), serve as a signal peptide directing secretion. At 22 to 81 (NGIQGFFYPWSCEGDVWDRESCGGQAAIENPNLCLRLRCCYRDGVCYHQRPDENMRRKHM) the chain is on the extracellular side. The P-type domain occupies 31 to 71 (WSCEGDVWDRESCGGQAAIENPNLCLRLRCCYRDGVCYHQR). 3 disulfides stabilise this stretch: C33–C61, C43–C60, and C55–C67. A helical membrane pass occupies residues 82–102 (WALGWTCGSLLFLITSICLFW). Residues 103–166 (WARRQDMLHL…VSGEDTGGEE (64 aa)) lie on the Cytoplasmic side of the membrane. The disordered stretch occupies residues 130 to 166 (LSKDRRSANKSTTVLQSPGGEVETAAAVSGEDTGGEE).

Detected in testis and in a mixture of spermatogenic cells at various stages (testicular germ cells). Not detected in heart, brain, spleen, lung, liver, skeletal muscle and kidney.

It localises to the membrane. The polypeptide is Transmembrane protein 190 (Tmem190) (Mus musculus (Mouse)).